A 474-amino-acid chain; its full sequence is Dipeptidase A (474 aa).

The active site involves C6.

It belongs to the peptidase C69 family. In terms of assembly, homooctamer.

It catalyses the reaction an L-aminoacyl-L-amino acid + H2O = 2 an L-alpha-amino acid. Inhibited by Zn(2+), Cu(2+), Ca(2+) and Cd(2+). In terms of biological role, hydrolyzes a wide range of dipeptides but unable to hydrolyze dipeptides containing proline. Highest activity against Met-Ala. The protein is Dipeptidase A (pepDA) of Lactobacillus helveticus (Lactobacillus suntoryeus).